The chain runs to 1499 residues: Ring canal kelch homolog (1499 aa).

Over residues 56-66 (LDESSQKQLPR) the composition is skewed to polar residues. Residues 56 to 75 (LDESSQKQLPRSNGKEKTTG) form a disordered region. One can recognise a BTB domain in the interval 100 to 166 (CDVVLVAEGI…VYRAVVEVTE (67 aa)). 6 Kelch repeats span residues 351–396 (VLLV…VLGD), 397–443 (KVYA…VLNN), 444–490 (CIYA…VVNG), 492–539 (LYAV…VLDN), 541–586 (LYAV…AHNG), and 588–634 (LYVV…MIDK). A non-standard amino acid (selenocysteine) is located at residue Sec637. Disordered regions lie at residues 679–714 (AGQAAGFGNDDENSQAEGLNPEPANSNNSAPNGNNV), 750–786 (LQYAVLNQPQPGPSGLGPGQAHRSLGGERGAVGGGGG), 825–856 (AGYDVPRGRPAPSYYQNQPPTGPSANGRCPNL), 984–1017 (NQSNSSSASSASPYGANGPATTSQPNPTKDSSSV), 1033–1085 (SMNN…GNGG), 1107–1160 (ASTS…PVDV), 1301–1321 (QVGRARSESPSRPPGSDPLRT), and 1334–1499 (ARSP…TASE). Residues 698-713 (NPEPANSNNSAPNGNN) show a composition bias toward low complexity. Gly residues predominate over residues 776 to 786 (GERGAVGGGGG). Residues 986–1003 (SNSSSASSASPYGANGPA) are compositionally biased toward low complexity. Over residues 1004-1017 (TTSQPNPTKDSSSV) the composition is skewed to polar residues. A compositionally biased stretch (low complexity) spans 1040–1054 (SSAAHGTASGSAPAA). The span at 1065 to 1085 (ISGGASGGGAGGAGSSGGNGG) shows a compositional bias: gly residues. Over residues 1107–1119 (ASTSTTLGGKSTG) the composition is skewed to low complexity. Residues 1135–1147 (GPSDPTAGTSAPQ) are compositionally biased toward polar residues. A compositionally biased stretch (basic and acidic residues) spans 1348–1359 (NREKPREVRRIT). The segment covering 1401–1410 (SSASSSSDSD) has biased composition (low complexity). Residues 1460-1471 (VGSSSNETSDSL) show a composition bias toward polar residues.

It localises to the cytoplasm. Its subcellular location is the cytoskeleton. May play a role in organizing the actin cytoskeleton. The chain is Ring canal kelch homolog from Anopheles stephensi (Indo-Pakistan malaria mosquito).